Consider the following 232-residue polypeptide: Large ribosomal subunit protein uL1 (232 aa).

The protein belongs to the universal ribosomal protein uL1 family. As to quaternary structure, part of the 50S ribosomal subunit.

Binds directly to 23S rRNA. The L1 stalk is quite mobile in the ribosome, and is involved in E site tRNA release. Its function is as follows. Protein L1 is also a translational repressor protein, it controls the translation of the L11 operon by binding to its mRNA. The polypeptide is Large ribosomal subunit protein uL1 (Bartonella bacilliformis (strain ATCC 35685 / KC583 / Herrer 020/F12,63)).